The primary structure comprises 274 residues: 2,3,4,5-tetrahydropyridine-2,6-dicarboxylate N-succinyltransferase (274 aa).

The substrate site is built by Arg-103 and Asp-140.

Belongs to the transferase hexapeptide repeat family. As to quaternary structure, homotrimer.

The protein resides in the cytoplasm. The catalysed reaction is (S)-2,3,4,5-tetrahydrodipicolinate + succinyl-CoA + H2O = (S)-2-succinylamino-6-oxoheptanedioate + CoA. It participates in amino-acid biosynthesis; L-lysine biosynthesis via DAP pathway; LL-2,6-diaminopimelate from (S)-tetrahydrodipicolinate (succinylase route): step 1/3. In Pasteurella multocida (strain Pm70), this protein is 2,3,4,5-tetrahydropyridine-2,6-dicarboxylate N-succinyltransferase.